Reading from the N-terminus, the 179-residue chain is Large ribosomal subunit protein uL6 (179 aa).

The protein belongs to the universal ribosomal protein uL6 family. In terms of assembly, part of the 50S ribosomal subunit.

In terms of biological role, this protein binds to the 23S rRNA, and is important in its secondary structure. It is located near the subunit interface in the base of the L7/L12 stalk, and near the tRNA binding site of the peptidyltransferase center. This is Large ribosomal subunit protein uL6 from Bacillus subtilis (strain 168).